Reading from the N-terminus, the 1830-residue chain is Guanine nucleotide exchange factor SPIKE 1 (1830 aa).

Methionine 1 carries the N-acetylmethionine modification. The tract at residues 285–304 (NTGESASPSSPLAPSMTASS) is disordered. The span at 289-304 (SASPSSPLAPSMTASS) shows a compositional bias: low complexity. One can recognise a C2 DOCK-type domain in the interval 463–622 (FHCLYVYPVA…NIFKLRLRLC (160 aa)). Residue serine 1051 is modified to Phosphoserine. Residue threonine 1079 is modified to Phosphothreonine. Serine 1095 bears the Phosphoserine mark. In terms of domain architecture, DOCKER spans 1379–1828 (MAFAPVPDLH…LSHYIPAILS (450 aa)).

This sequence belongs to the DOCK family. Homodimer. Component of SCAR/WAVE and ARP2/3 complexes. Interacts directly with ARAC4/ROP2, ARAC1/ROP3, ARAC5/ROP4, ARAC6/ROP5, ARAC8/ROP10, ARAC9/ROP8, SCAR1, SCAR2, SCAR3, SCAR4, ABI1, ABI2, ABI3 and ABI4. Binds to the inactive GDP-bound form of ARAC3/ROP6. In terms of tissue distribution, expressed ubiquitously, in roots and aerial organs.

The protein resides in the cytoplasm. The protein localises to the endoplasmic reticulum membrane. It localises to the nucleus. Its function is as follows. Guanine nucleotide exchange factor (GEF) for Rho and Rac. GEF proteins activate small GTPases by exchanging bound GDP for free GTP. Controls actin polymerization via the two heteromeric complexes WAVE and actin-related protein (ARP) 2/3. Involved in cytoskeletal reorganization required for cell shape (e.g. trichome and cotyledon) control and tissue development. Prevents cortical microtubules organization into parallel arrays oriented perpendicular to the axis of cell elongation to limit anisotropic cell growth during petal development, probably by triggering ARAC4/ROP2 and ARAC3/ROP6 activity. Promotes polarized growth and cell-cell adhesion in the leaf epidermis probably by promoting the formation of endoplasmic reticulum (ER) exit site (ERES) and/or trafficking between the ER and Golgi. Triggers ARAC3/ROP6 activation required for auxin-mediated inhibition of PIN2 internalization during gravitropic responses (, PubMed:22683260). This Arabidopsis thaliana (Mouse-ear cress) protein is Guanine nucleotide exchange factor SPIKE 1.